A 144-amino-acid chain; its full sequence is Acidic phospholipase A2 S15-109 (144 aa).

The first 19 residues, 1-19 (MYPAHLLVLLAVCVSLLGA), serve as a signal peptide directing secretion. Positions 20–27 (SDIPPQPL) are excised as a propeptide. Intrachain disulfides connect Cys38–Cys98, Cys54–Cys143, Cys56–Cys72, Cys71–Cys126, Cys78–Cys119, Cys87–Cys112, and Cys105–Cys117. 3 residues coordinate Ca(2+): Tyr55, Gly57, and Gly59. His75 is an active-site residue. Ca(2+) is bound at residue Asp76. Asp120 is an active-site residue.

This sequence belongs to the phospholipase A2 family. Group I subfamily. D49 sub-subfamily. Ca(2+) serves as cofactor. Expressed by the venom gland.

The protein localises to the secreted. The enzyme catalyses a 1,2-diacyl-sn-glycero-3-phosphocholine + H2O = a 1-acyl-sn-glycero-3-phosphocholine + a fatty acid + H(+). In terms of biological role, snake venom phospholipase A2 (PLA2) that inhibits collagen-induced platelet aggregation. PLA2 catalyzes the calcium-dependent hydrolysis of the 2-acyl groups in 3-sn-phosphoglycerides. This chain is Acidic phospholipase A2 S15-109, found in Austrelaps superbus (Lowland copperhead snake).